The sequence spans 287 residues: MLHTAAPIDRVAIEIGPLSIYWYGIIIAFGAILAIYLASKEADRLGLTKDLMLDFVMFAVPIAIIFARIYYVFFEFDQYANGPWWKVFAIWEGGIAIHGAVIGGVITAIVFAKVRKVSFWQIADIVAPSLILGQAIGRWGNFVNQEAHGGPISQATYESFHQYLPDFIMNQMTINGVMYHPTFLYESVWNILIFVGLLLLRKYNPVRGEVFLTYAITYSIGRYFIEGLRTDSLYMFDIIRTAQFISILIIIVSIIFIIYRRKTVSERYLDAPPSNKKKNKKSTKKKK.

4 helical membrane-spanning segments follow: residues 15 to 35 (IGPL…ILAI), 55 to 75 (FVMF…VFFE), 90 to 110 (IWEG…TAIV), and 117 to 137 (VSFW…QAIG). R138 contributes to the a 1,2-diacyl-sn-glycero-3-phospho-(1'-sn-glycerol) binding site. 2 consecutive transmembrane segments (helical) span residues 180-200 (HPTF…LLLL) and 238-258 (IIRT…IFII).

It belongs to the Lgt family.

The protein resides in the cell membrane. The enzyme catalyses L-cysteinyl-[prolipoprotein] + a 1,2-diacyl-sn-glycero-3-phospho-(1'-sn-glycerol) = an S-1,2-diacyl-sn-glyceryl-L-cysteinyl-[prolipoprotein] + sn-glycerol 1-phosphate + H(+). It participates in protein modification; lipoprotein biosynthesis (diacylglyceryl transfer). Its function is as follows. Catalyzes the transfer of the diacylglyceryl group from phosphatidylglycerol to the sulfhydryl group of the N-terminal cysteine of a prolipoprotein, the first step in the formation of mature lipoproteins. The chain is Phosphatidylglycerol--prolipoprotein diacylglyceryl transferase from Oceanobacillus iheyensis (strain DSM 14371 / CIP 107618 / JCM 11309 / KCTC 3954 / HTE831).